A 242-amino-acid chain; its full sequence is 1-(5-phosphoribosyl)-5-[(5-phosphoribosylamino)methylideneamino] imidazole-4-carboxamide isomerase (242 aa).

Asp-8 functions as the Proton acceptor in the catalytic mechanism. The Proton donor role is filled by Asp-129.

The protein belongs to the HisA/HisF family.

It is found in the cytoplasm. It carries out the reaction 1-(5-phospho-beta-D-ribosyl)-5-[(5-phospho-beta-D-ribosylamino)methylideneamino]imidazole-4-carboxamide = 5-[(5-phospho-1-deoxy-D-ribulos-1-ylimino)methylamino]-1-(5-phospho-beta-D-ribosyl)imidazole-4-carboxamide. It functions in the pathway amino-acid biosynthesis; L-histidine biosynthesis; L-histidine from 5-phospho-alpha-D-ribose 1-diphosphate: step 4/9. This chain is 1-(5-phosphoribosyl)-5-[(5-phosphoribosylamino)methylideneamino] imidazole-4-carboxamide isomerase, found in Clostridium botulinum (strain ATCC 19397 / Type A).